Reading from the N-terminus, the 759-residue chain is LPS-assembly protein LptD (759 aa).

A signal peptide spans 1 to 45 (MKPLKLELNPRDFNHYQAAFLPYRMKIKQPLHVLCFSVCSLSAVA).

It belongs to the LptD family. As to quaternary structure, component of the lipopolysaccharide transport and assembly complex. Interacts with LptE and LptA.

It localises to the cell outer membrane. In terms of biological role, together with LptE, is involved in the assembly of lipopolysaccharide (LPS) at the surface of the outer membrane. This chain is LPS-assembly protein LptD, found in Pseudoalteromonas atlantica (strain T6c / ATCC BAA-1087).